The following is a 453-amino-acid chain: Venom prothrombin activator notecarin-D2 (453 aa).

An N-terminal signal peptide occupies residues 1-20; that stretch reads MAPQLLLCLILTFLWSLPEA. The propeptide occupies 21-40; sequence ESNVFLKSKVANRFLQRTKR. Positions 41 to 86 constitute a Gla domain; the sequence is SNSLFEEIRPGNIERECIEEKCSKEEAREVFEDNEKTETFWNVYVD. Glu46, Glu47, Glu54, Glu56, Glu59, Glu60, Glu65, Glu66, Glu69, Glu72, and Glu75 each carry 4-carboxyglutamate. Cys57 and Cys62 are disulfide-bonded. The EGF-like 1; calcium-binding domain maps to 86–122; it reads DGDQCSSNPCHYRGTCKDGIGSYTCTCLPNYEGKNCE. 11 disulfide bridges follow: Cys90-Cys101, Cys95-Cys110, Cys112-Cys121, Cys129-Cys140, Cys136-Cys149, Cys151-Cys164, Cys172-Cys326, Cys216-Cys221, Cys236-Cys252, Cys374-Cys388, and Cys399-Cys427. An O-linked (Hex...) serine glycan is attached at Ser92. Residues 129–164 enclose the EGF-like 2 domain; that stretch reads CRAFNGNCWHFCKRVQSETQCSCAESYLLGVDGHSC. A propeptide spans 182–209 (activation peptide); sequence REASLPDFVQSQKATVLKKSDNPSPDIR. Residues 210-451 form the Peptidase S1 domain; it reads IVNGMDCKLG…FIPWIKKIMS (242 aa). Catalysis depends on His251, which acts as the Charge relay system. A glycan (N-linked (GlcNAc...) asparagine) is linked at Asn254. Residue Asp306 is the Charge relay system of the active site. Ser403 serves as the catalytic Charge relay system.

Belongs to the peptidase S1 family. Snake venom subfamily. Heterodimer of a light chain and a heavy chain; disulfide-linked. In terms of processing, gamma-carboxyglutamate residues are formed by vitamin K dependent carboxylation. These residues are essential for the binding of calcium. Expressed by the venom gland.

The protein resides in the secreted. The enzyme catalyses Selective cleavage of Arg-|-Thr and then Arg-|-Ile bonds in prothrombin to form thrombin.. Its function is as follows. Snake prothrombin activator that attacks the hemostatic system of prey. This protein is functionally similar to blood coagulation factor Xa. This chain is Venom prothrombin activator notecarin-D2, found in Notechis scutatus scutatus (Mainland tiger snake).